Consider the following 211-residue polypeptide: Pyridoxine/pyridoxamine 5'-phosphate oxidase (211 aa).

Residues R7–Y10 and K65 contribute to the substrate site. Residues R60–K65, Y75–T76, R81, K82, and Q104 each bind FMN. Positions 122, 126, and 130 each coordinate substrate. FMN is bound by residues Q139 to S140 and W184. Residue R190 to H192 coordinates substrate. R194 lines the FMN pocket.

Belongs to the pyridoxamine 5'-phosphate oxidase family. Homodimer. It depends on FMN as a cofactor.

The catalysed reaction is pyridoxamine 5'-phosphate + O2 + H2O = pyridoxal 5'-phosphate + H2O2 + NH4(+). It carries out the reaction pyridoxine 5'-phosphate + O2 = pyridoxal 5'-phosphate + H2O2. It participates in cofactor metabolism; pyridoxal 5'-phosphate salvage; pyridoxal 5'-phosphate from pyridoxamine 5'-phosphate: step 1/1. It functions in the pathway cofactor metabolism; pyridoxal 5'-phosphate salvage; pyridoxal 5'-phosphate from pyridoxine 5'-phosphate: step 1/1. In terms of biological role, catalyzes the oxidation of either pyridoxine 5'-phosphate (PNP) or pyridoxamine 5'-phosphate (PMP) into pyridoxal 5'-phosphate (PLP). The polypeptide is Pyridoxine/pyridoxamine 5'-phosphate oxidase (Photobacterium profundum (strain SS9)).